An 881-amino-acid polypeptide reads, in one-letter code: MSQPADINQSESSAETITQGRRADRPEETPSSSVYEQNLRFGDFLMPTVGDADATDSLSQSTNDRDIYSPREIDQYTRKVSSRTDPSTSTISNARQHPRNSVSRLSRSSSNVRQQRDIPKQNFKVRPLSPLRGQSPASLRSEESFTLKERQNAINKTRAFGMRLWKPALYKKFRSINRDADIDIHDEPLKRPNTSISNVIWLICFGAPLFLVIFICYIFFTVLSFFNVPDAIVYSKLCRGLMFYLLYPFGQHVRHKVKRLSVRSPAHPIYQTQHSHYDETPTSHHPDPARLNFLSFSFCVNPMNQSLDCNTTPHRRNASSIIYTLMYYLIIAPTLLITSAICMFTIFFVPCARTLWAICRHLRTCPLSLSFRPNLALPLSMDSSDVVLLCVKKAASWKYYKYTIDGIYIIYFDMLALIIPTIFFGFFGSQGHWFTSSVFLFTASLVSIIPLAYFIGMAVASISAQSSMGMGAFINAFFGSVIEVFLYSVALRKGNAGLVEGSVIGSILAGLLLMPGLSMCAGAIRKKFQFFNIKSAGATSTMLLFAVLGAFAPTMLFRIYGPFRLDCEPCGANCQKCTKHYVLENDSLYKNRVLPFTYCCSIMLVLAYAIGLWFTLRTHASHIWQNFTADDISFLKAEEEVGEPVNQDTAGNMSDSSEGGEAVVNGNSQHHHNRDDASSGLSSNGSENESLEHEPTNELPQRPLVNQSQNSHGDDAPNWSRSKSAIILLSATFLYSLIAEILVEHVDTVLDKFAISEKFLGLTLFALVPNTTEFMNAISFALNENIALSMEIGSAYALQVCLLQIPCLMGYSLFQYYRSGDSISFKHLFTMVFPTWDMICVMICVFLLTYVHSEGKSNYFKGSILVLAYLVSMLGFTFFNY.

A compositionally biased stretch (polar residues) spans 1 to 19; that stretch reads MSQPADINQSESSAETITQ. Disordered regions lie at residues 1–39 and 52–142; these read MSQPADINQSESSAETITQGRRADRPEETPSSSVYEQNL and ADAT…LRSE. A compositionally biased stretch (basic and acidic residues) spans 63–77; it reads NDRDIYSPREIDQYT. Positions 83-95 are enriched in polar residues; that stretch reads RTDPSTSTISNAR. A compositionally biased stretch (low complexity) spans 99–113; it reads RNSVSRLSRSSSNVR. Ser129 is subject to Phosphoserine. A run of 8 helical transmembrane segments spans residues 200-220, 329-349, 407-427, 438-458, 471-491, 504-524, 537-557, and 594-614; these read IWLICFGAPLFLVIFICYIFF, LIIAPTLLITSAICMFTIFFV, IYIIYFDMLALIIPTIFFGFF, VFLFTASLVSIIPLAYFIGMA, GAFINAFFGSVIEVFLYSVAL, IGSILAGLLLMPGLSMCAGAI, GATSTMLLFAVLGAFAPTMLF, and LPFTYCCSIMLVLAYAIGLWF. A disordered region spans residues 641–717; that stretch reads VGEPVNQDTA…SQNSHGDDAP (77 aa). Residues 646 to 657 are compositionally biased toward polar residues; it reads NQDTAGNMSDSS. Residues 678–688 are compositionally biased toward low complexity; the sequence is SSGLSSNGSEN. 5 helical membrane-spanning segments follow: residues 726-746, 762-782, 794-814, 828-848, and 859-879; these read IILLSATFLYSLIAEILVEHV, LTLFALVPNTTEFMNAISFAL, SAYALQVCLLQIPCLMGYSLF, LFTMVFPTWDMICVMICVFLL, and YFKGSILVLAYLVSMLGFTFF.

The protein belongs to the Ca(2+):cation antiporter (CaCA) (TC 2.A.19) family.

The protein resides in the endoplasmic reticulum membrane. Its function is as follows. Putative cation exchanger. The sequence is that of Putative cation exchanger C521.04c from Schizosaccharomyces pombe (strain 972 / ATCC 24843) (Fission yeast).